Consider the following 96-residue polypeptide: Large ribosomal subunit protein bL27 (96 aa).

Residues 1 to 9 constitute a propeptide that is removed on maturation; the sequence is MLNMNLQLL.

It belongs to the bacterial ribosomal protein bL27 family. In terms of processing, the N-terminus is cleaved by ribosomal processing cysteine protease Prp.

The polypeptide is Large ribosomal subunit protein bL27 (Clostridioides difficile (strain 630) (Peptoclostridium difficile)).